We begin with the raw amino-acid sequence, 1382 residues long: DNA-directed RNA polymerase subunit beta'' (1382 aa).

Zn(2+) is bound by residues Cys224, Cys294, Cys301, and Cys304.

The protein belongs to the RNA polymerase beta' chain family. RpoC2 subfamily. In terms of assembly, in plastids the minimal PEP RNA polymerase catalytic core is composed of four subunits: alpha, beta, beta', and beta''. When a (nuclear-encoded) sigma factor is associated with the core the holoenzyme is formed, which can initiate transcription. Zn(2+) serves as cofactor.

Its subcellular location is the plastid. It localises to the chloroplast. The catalysed reaction is RNA(n) + a ribonucleoside 5'-triphosphate = RNA(n+1) + diphosphate. In terms of biological role, DNA-dependent RNA polymerase catalyzes the transcription of DNA into RNA using the four ribonucleoside triphosphates as substrates. This chain is DNA-directed RNA polymerase subunit beta'', found in Liriodendron tulipifera (Tuliptree).